Here is a 328-residue protein sequence, read N- to C-terminus: 2-oxoglutarate-dependent dioxygenase gloE (328 aa).

The Fe2OG dioxygenase domain maps to 170–271 (TRTNLTFLKY…RYTLAYFLRP (102 aa)). The Fe cation site is built by H194, D196, and H249. R262 provides a ligand contact to 2-oxoglutarate.

It belongs to the iron/ascorbate-dependent oxidoreductase family. Fe(2+) serves as cofactor.

It participates in mycotoxin biosynthesis. In terms of biological role, 2-oxoglutarate-dependent dioxygenase; part of the gene cluster that mediates the biosynthesis of pneumocandins, lipohexapeptides of the echinocandin family that prevent fungal cell wall formation by non-competitive inhibition of beta-1,3-glucan synthase. The 10,12-dimethylmyristoyl side chain is synthesized by the reducing polyketide synthase gloL/GLPKS4. The thioesterase gloN/GLHYD exclusively interacts with gloL/GLPKS4 to maintain turnover of the polyketide side chain. The 10R,12S-dimethylmyristic acid is then transferred to the first thiolation domain of the nonribosomal peptide synthetase gloA/GLNRPS4 by the acyl-AMP ligase gloD/GLligase, followed by its acylation to L-ornithine to trigger elongation of the cyclic hexapeptide. L-ornithine, 4R-hydroxyl-L-proline (generated from L-proline by the dioxygenase gloF/GLOXY2), 3S-hydroxyl-L-homotyrosine (generated by gloG/GLHtyB, gloH/GLHtyA, gloI/GLHtyC, gloJ/GLHtyD and hydroxylated at C-3 by the dioxygenase gloM/GLOXY1), 3R-hydroxyl-L-glutamine (generated from L-glutamine probably by the dioxygenase gloE/GLOXY3) and 3S-hydroxyl-L-proline (generated from L-proline by the dioxygenase gloF/GLOXY2 to yield pneumocandin B0), or 3S-hydroxyl-4S-methyl-L-proline (generated from L-leucine by the dioxygenase gloC/GLOXY4 to yield pneumocandin A0) are sequentially added to the growing chain. The last C domain of gloA/GLNRPS4 is proposed to be responsible for cyclization by condensation to form the peptide bond between L-ornithine and 3S-hydroxyl-4S-methyl-L-proline (for pneumocandin A0) or 3S-hydroxyl-L-proline (for pneumocandin B0). Finally, the subsequent C-4 hydroxylation of 3S-hydroxyl-L-homotyrosine and L-ornithine dihydroxylation at C-4 and C-5 are performed by the cytochrome P450 monooxygenases gloP/GLP450-1 and gloO/GLP450-2, respectively. The sequence is that of 2-oxoglutarate-dependent dioxygenase gloE from Glarea lozoyensis (strain ATCC 20868 / MF5171).